A 381-amino-acid polypeptide reads, in one-letter code: Chorismate synthase (381 aa).

2 residues coordinate NADP(+): Arg-41 and Arg-47. Residues 127-129, 247-248, Gly-291, 306-310, and Arg-332 each bind FMN; these read RAS, QA, and KPIPT.

This sequence belongs to the chorismate synthase family. As to quaternary structure, homotetramer. It depends on FMNH2 as a cofactor.

The enzyme catalyses 5-O-(1-carboxyvinyl)-3-phosphoshikimate = chorismate + phosphate. It participates in metabolic intermediate biosynthesis; chorismate biosynthesis; chorismate from D-erythrose 4-phosphate and phosphoenolpyruvate: step 7/7. Catalyzes the anti-1,4-elimination of the C-3 phosphate and the C-6 proR hydrogen from 5-enolpyruvylshikimate-3-phosphate (EPSP) to yield chorismate, which is the branch point compound that serves as the starting substrate for the three terminal pathways of aromatic amino acid biosynthesis. This reaction introduces a second double bond into the aromatic ring system. The chain is Chorismate synthase from Anaeromyxobacter sp. (strain K).